The primary structure comprises 513 residues: Acetylcholine receptor subunit delta (513 aa).

Residues 1–18 form the signal peptide; it reads MAVLLALFGALVLSGGLC. The Extracellular segment spans residues 19–244; sequence VNQEERLIHH…ITFYLIIKRK (226 aa). N-linked (GlcNAc...) asparagine glycosylation is found at asparagine 88 and asparagine 161. A disulfide bond links cysteine 148 and cysteine 162. The next 3 membrane-spanning stretches (helical) occupy residues 245-269, 277-295, and 311-332; these read PLFYVINIVTPCVLIAFMAILVFYL, MTLVISVLLAQSVFLLLVS, and YLLFIMLLVTAVVVICVVVLNF. Topologically, residues 333 to 467 are cytoplasmic; the sequence is HFRTPSTHVM…WNRVARTLDR (135 aa). Tyrosine 388 carries the phosphotyrosine; by Tyr-kinases modification. A helical transmembrane segment spans residues 468–490; the sequence is LCLFLITPMLVVGTLWIFLMGIY.

This sequence belongs to the ligand-gated ion channel (TC 1.A.9) family. Acetylcholine receptor (TC 1.A.9.1) subfamily. In terms of assembly, pentamer of two alpha chains, and one each of the beta, delta, and gamma chains.

The protein localises to the postsynaptic cell membrane. Its subcellular location is the cell membrane. It catalyses the reaction K(+)(in) = K(+)(out). The enzyme catalyses Na(+)(in) = Na(+)(out). Its function is as follows. After binding acetylcholine, the AChR responds by an extensive change in conformation that affects all subunits and leads to opening of an ion-conducting channel across the plasma membrane. The sequence is that of Acetylcholine receptor subunit delta (CHRND) from Gallus gallus (Chicken).